The following is a 494-amino-acid chain: 3-octaprenyl-4-hydroxybenzoate carboxy-lyase (494 aa).

N172 is a binding site for Mn(2+). Residues 175-177 (IYR), 189-191 (RWL), and 194-195 (RG) contribute to the prenylated FMN site. E238 lines the Mn(2+) pocket. D294 serves as the catalytic Proton donor.

Belongs to the UbiD family. In terms of assembly, homohexamer. It depends on prenylated FMN as a cofactor. Mn(2+) serves as cofactor.

The protein localises to the cell membrane. The enzyme catalyses a 4-hydroxy-3-(all-trans-polyprenyl)benzoate + H(+) = a 2-(all-trans-polyprenyl)phenol + CO2. It participates in cofactor biosynthesis; ubiquinone biosynthesis. Catalyzes the decarboxylation of 3-octaprenyl-4-hydroxy benzoate to 2-octaprenylphenol, an intermediate step in ubiquinone biosynthesis. This Albidiferax ferrireducens (strain ATCC BAA-621 / DSM 15236 / T118) (Rhodoferax ferrireducens) protein is 3-octaprenyl-4-hydroxybenzoate carboxy-lyase.